Here is a 497-residue protein sequence, read N- to C-terminus: tRNA-2-methylthio-N(6)-dimethylallyladenosine synthase (497 aa).

Positions Met-1–Gln-10 are enriched in basic and acidic residues. The tract at residues Met-1–Arg-26 is disordered. The region spanning Arg-26–Ile-142 is the MTTase N-terminal domain. [4Fe-4S] cluster is bound by residues Cys-35, Cys-71, Cys-105, Cys-179, Cys-183, and Cys-186. In terms of domain architecture, Radical SAM core spans Arg-165 to Glu-395. The region spanning Gln-398–Leu-464 is the TRAM domain.

The protein belongs to the methylthiotransferase family. MiaB subfamily. In terms of assembly, monomer. The cofactor is [4Fe-4S] cluster.

The protein resides in the cytoplasm. It catalyses the reaction N(6)-dimethylallyladenosine(37) in tRNA + (sulfur carrier)-SH + AH2 + 2 S-adenosyl-L-methionine = 2-methylsulfanyl-N(6)-dimethylallyladenosine(37) in tRNA + (sulfur carrier)-H + 5'-deoxyadenosine + L-methionine + A + S-adenosyl-L-homocysteine + 2 H(+). In terms of biological role, catalyzes the methylthiolation of N6-(dimethylallyl)adenosine (i(6)A), leading to the formation of 2-methylthio-N6-(dimethylallyl)adenosine (ms(2)i(6)A) at position 37 in tRNAs that read codons beginning with uridine. The chain is tRNA-2-methylthio-N(6)-dimethylallyladenosine synthase from Acidothermus cellulolyticus (strain ATCC 43068 / DSM 8971 / 11B).